The sequence spans 453 residues: uncharacterized protein (453 aa).

Disordered regions lie at residues 183 to 210 (GNGRSNPSKNNERGRTKAHNYKTRRSLS) and 428 to 453 (PDSMQHPPTFSKNNTSSNPKSHQYSK). The span at 198–207 (TKAHNYKTRR) shows a compositional bias: basic residues. Over residues 433 to 453 (HPPTFSKNNTSSNPKSHQYSK) the composition is skewed to polar residues.

This is an uncharacterized protein from Saccharomyces cerevisiae (strain ATCC 204508 / S288c) (Baker's yeast).